A 112-amino-acid polypeptide reads, in one-letter code: uncharacterized protein (112 aa).

Helical transmembrane passes span 33–53 (PSPL…PFGA), 58–78 (LYIY…NVCT), and 91–111 (CVYV…LLFV).

The protein resides in the membrane. This is an uncharacterized protein from Saccharomyces cerevisiae (strain ATCC 204508 / S288c) (Baker's yeast).